The primary structure comprises 215 residues: MKLGLIGKKIGMTRVFTESGNSIPVTVLDVSGNRVVQVKTEEKDGYSAVQLTQGYRRKNRITKALSGHFSQAGVEAGTVIKEFRVDHDIGSDIKIGSEISVELFEVGSKVDVCGISIGKGYAGTIKRHNFSSSRASHGNSRSHNVPGSIGMAQDPGRVFPGKKMTGHLGNAQCTVQNIEVVRVDAGRGLLFLKGSVPGSKGNGVFIRPGVKQPSK.

Low complexity predominate over residues 131–144 (SSSRASHGNSRSHN). The disordered stretch occupies residues 131–150 (SSSRASHGNSRSHNVPGSIG). Residue Gln153 is modified to N5-methylglutamine.

This sequence belongs to the universal ribosomal protein uL3 family. Part of the 50S ribosomal subunit. Forms a cluster with proteins L14 and L19. Methylated by PrmB.

One of the primary rRNA binding proteins, it binds directly near the 3'-end of the 23S rRNA, where it nucleates assembly of the 50S subunit. This chain is Large ribosomal subunit protein uL3, found in Nitrosomonas europaea (strain ATCC 19718 / CIP 103999 / KCTC 2705 / NBRC 14298).